Consider the following 214-residue polypeptide: Phosphatidylserine decarboxylase proenzyme (214 aa).

Ser-182 functions as the Schiff-base intermediate with substrate; via pyruvic acid in the catalytic mechanism. Ser-182 is modified (pyruvic acid (Ser); by autocatalysis).

It belongs to the phosphatidylserine decarboxylase family. PSD-A subfamily. As to quaternary structure, heterodimer of a large membrane-associated beta subunit and a small pyruvoyl-containing alpha subunit. The cofactor is pyruvate. In terms of processing, is synthesized initially as an inactive proenzyme. Formation of the active enzyme involves a self-maturation process in which the active site pyruvoyl group is generated from an internal serine residue via an autocatalytic post-translational modification. Two non-identical subunits are generated from the proenzyme in this reaction, and the pyruvate is formed at the N-terminus of the alpha chain, which is derived from the carboxyl end of the proenzyme. The post-translation cleavage follows an unusual pathway, termed non-hydrolytic serinolysis, in which the side chain hydroxyl group of the serine supplies its oxygen atom to form the C-terminus of the beta chain, while the remainder of the serine residue undergoes an oxidative deamination to produce ammonia and the pyruvoyl prosthetic group on the alpha chain.

It localises to the cell membrane. It catalyses the reaction a 1,2-diacyl-sn-glycero-3-phospho-L-serine + H(+) = a 1,2-diacyl-sn-glycero-3-phosphoethanolamine + CO2. The protein operates within phospholipid metabolism; phosphatidylethanolamine biosynthesis; phosphatidylethanolamine from CDP-diacylglycerol: step 2/2. Its function is as follows. Catalyzes the formation of phosphatidylethanolamine (PtdEtn) from phosphatidylserine (PtdSer). The sequence is that of Phosphatidylserine decarboxylase proenzyme from Burkholderia lata (strain ATCC 17760 / DSM 23089 / LMG 22485 / NCIMB 9086 / R18194 / 383).